A 284-amino-acid polypeptide reads, in one-letter code: RNA polymerase sigma factor RpoH (284 aa).

Positions 53 to 122 are sigma-70 factor domain-2; that stretch reads LILSHLRFVI…IHEYVLRNWR (70 aa). Positions 77 to 80 match the Interaction with polymerase core subunit RpoC motif; sequence DLIQ. Positions 228–280 are sigma-70 factor domain-4; the sequence is ALLRLDERSRHIIHARWLDKNKKNTLQNIANNYGISAERVRQLEKNAMKKLKL. Residues 253–272 constitute a DNA-binding region (H-T-H motif); that stretch reads LQNIANNYGISAERVRQLEK.

It belongs to the sigma-70 factor family. RpoH subfamily. Interacts with the RNA polymerase core enzyme.

The protein localises to the cytoplasm. In terms of biological role, sigma factors are initiation factors that promote the attachment of RNA polymerase to specific initiation sites and are then released. This sigma factor is involved in regulation of expression of heat shock genes. The chain is RNA polymerase sigma factor RpoH from Buchnera aphidicola subsp. Acyrthosiphon pisum (strain APS) (Acyrthosiphon pisum symbiotic bacterium).